The following is a 259-amino-acid chain: NAD kinase (259 aa).

Asp-43 (proton acceptor) is an active-site residue. Residues 43 to 44 (DG), 111 to 112 (NE), and Arg-136 each bind NAD(+).

It belongs to the NAD kinase family. The cofactor is a divalent metal cation.

The protein resides in the cytoplasm. It catalyses the reaction NAD(+) + ATP = ADP + NADP(+) + H(+). Involved in the regulation of the intracellular balance of NAD and NADP, and is a key enzyme in the biosynthesis of NADP. Catalyzes specifically the phosphorylation on 2'-hydroxyl of the adenosine moiety of NAD to yield NADP. The protein is NAD kinase of Mycoplasma pneumoniae (strain ATCC 29342 / M129 / Subtype 1) (Mycoplasmoides pneumoniae).